Consider the following 730-residue polypeptide: Wall-associated receptor kinase-like 3 (730 aa).

The signal sequence occupies residues 1–25; sequence MKTKTYNFRYIVASVLTLLMNGSSA. Over 26–357 the chain is Extracellular; sequence ATPPNSNSSS…AKLAHVLRGV (332 aa). N-linked (GlcNAc...) asparagine glycosylation is found at asparagine 32, asparagine 38, asparagine 68, asparagine 90, asparagine 119, asparagine 132, asparagine 212, asparagine 233, and asparagine 269. Residues 283 to 340 are atypical EGF-like; sequence CLCRYGYFSRMSYRSCYCGSGYRGNPYIRGGCIDIDECEVPNKCGEDTCVNMAGRYSC. Intrachain disulfides connect cysteine 285–cysteine 298, cysteine 320–cysteine 331, and cysteine 326–cysteine 340. Residues 358-378 form a helical membrane-spanning segment; it reads LIGLLGLLFFVIGIFGLYKFI. Over 379 to 730 the chain is Cytoplasmic; that stretch reads RKRRRIIRSM…LMEINRIYDS (352 aa). The Protein kinase domain occupies 428–699; sequence FSIDRVLGQG…REVSIKLERI (272 aa). Residues 434 to 442 and lysine 456 each bind ATP; that span reads LGQGGQGTV. The Proton acceptor role is filled by aspartate 553. A disordered region spans residues 703–730; that stretch reads PKDLDVHTENEEEEEEDQLMEINRIYDS. The span at 712–721 shows a compositional bias: acidic residues; that stretch reads NEEEEEEDQL.

This sequence belongs to the protein kinase superfamily. Ser/Thr protein kinase family. In terms of tissue distribution, preferentially expressed in roots and flowers.

Its subcellular location is the membrane. The enzyme catalyses L-seryl-[protein] + ATP = O-phospho-L-seryl-[protein] + ADP + H(+). It catalyses the reaction L-threonyl-[protein] + ATP = O-phospho-L-threonyl-[protein] + ADP + H(+). Serine/threonine-protein kinase that may function as a signaling receptor of extracellular matrix component. This Arabidopsis thaliana (Mouse-ear cress) protein is Wall-associated receptor kinase-like 3 (WAKL3).